The sequence spans 263 residues: MENKNVIQKMREKTPLIHCITNYVTINDCANILLSFGASPAMCEAYDEVYDFVSISSALYINLGTLTKEQETAAVLASISAKNHNVPVVIDPVGCPAIKRKVEVINRMAEVGRIDIIKGNIGEIKFLAGMDSETRGVDSLDNGENALDACTQLAKKYNCIVAATGEKDFVSDGKRGSVIKNGTEMLTKVTGAGCMLGALCAATCANFEDKLVSTTAAILSMNIAGEKAYEKAQLPGSFRIALIDNIYMISDEEIWERGNVEWK.

Met-42 serves as a coordination point for substrate. 2 residues coordinate ATP: Lys-118 and Thr-164. Gly-191 lines the substrate pocket.

Belongs to the Thz kinase family. It depends on Mg(2+) as a cofactor.

The enzyme catalyses 5-(2-hydroxyethyl)-4-methylthiazole + ATP = 4-methyl-5-(2-phosphooxyethyl)-thiazole + ADP + H(+). Its pathway is cofactor biosynthesis; thiamine diphosphate biosynthesis; 4-methyl-5-(2-phosphoethyl)-thiazole from 5-(2-hydroxyethyl)-4-methylthiazole: step 1/1. In terms of biological role, catalyzes the phosphorylation of the hydroxyl group of 4-methyl-5-beta-hydroxyethylthiazole (THZ). The sequence is that of Hydroxyethylthiazole kinase 1 from Clostridium botulinum (strain 657 / Type Ba4).